We begin with the raw amino-acid sequence, 35 residues long: Putative neurotoxin (35 aa).

The LCN-type CS-alpha/beta domain occupies 1–35 (KEGYPKNSEGCKITCLFNDPYCKGLCINLSTQADY).

In terms of tissue distribution, expressed by the venom gland.

Its subcellular location is the secreted. In terms of biological role, causes paralysis and death in insects (A.domestica). This is Putative neurotoxin from Rhopalurus junceus (Caribbean blue scorpion).